We begin with the raw amino-acid sequence, 471 residues long: Argininosuccinate lyase (471 aa).

It belongs to the lyase 1 family. Argininosuccinate lyase subfamily.

The protein resides in the cytoplasm. It carries out the reaction 2-(N(omega)-L-arginino)succinate = fumarate + L-arginine. It participates in amino-acid biosynthesis; L-arginine biosynthesis; L-arginine from L-ornithine and carbamoyl phosphate: step 3/3. This Renibacterium salmoninarum (strain ATCC 33209 / DSM 20767 / JCM 11484 / NBRC 15589 / NCIMB 2235) protein is Argininosuccinate lyase.